The primary structure comprises 34 residues: MSDIN-like toxin proprotein 5 (34 aa).

The propeptide occupies 1–10 (MSDINTARLP). Residues 11–20 (YVVFMSFIPP) constitute a cross-link (cyclopeptide (Tyr-Pro)). The propeptide occupies 21–34 (CVNDDIQVVLTRGE).

It belongs to the MSDIN fungal toxin family. Post-translationally, processed by the macrocyclase-peptidase enzyme POPB to yield a toxic cyclic decapeptide. POPB first removes 10 residues from the N-terminus. Conformational trapping of the remaining peptide forces the enzyme to release this intermediate rather than proceed to macrocyclization. The enzyme rebinds the remaining peptide in a different conformation and catalyzes macrocyclization of the N-terminal 10 residues.

In terms of biological role, probable toxin that belongs to the MSDIN-like toxin family responsible for a large number of food poisoning cases and deaths. The sequence is that of MSDIN-like toxin proprotein 5 from Amanita bisporigera (Destroying angel).